The primary structure comprises 115 residues: Large ribosomal subunit protein bL19 (115 aa).

The protein belongs to the bacterial ribosomal protein bL19 family.

In terms of biological role, this protein is located at the 30S-50S ribosomal subunit interface and may play a role in the structure and function of the aminoacyl-tRNA binding site. The chain is Large ribosomal subunit protein bL19 from Enterobacter sp. (strain 638).